We begin with the raw amino-acid sequence, 385 residues long: GDP-mannose-dependent alpha-(1-6)-phosphatidylinositol monomannoside mannosyltransferase (385 aa).

The GDP-alpha-D-mannose site is built by arginine 205, lysine 210, valine 262, and glutamate 299.

It belongs to the glycosyltransferase group 1 family. Glycosyltransferase 4 subfamily.

It catalyses the reaction a 1,2-diacyl-sn-glycero-3-phospho-[alpha-D-mannopyranosyl-(1&lt;-&gt;6)-D-myo-inositol] + GDP-alpha-D-mannose = a 2,6-O-bis(alpha-D-mannopyranosyl)-1-phosphatidyl-1D-myo-inositol + GDP + H(+). It carries out the reaction a 1,2-diacyl-sn-glycero-3-phospho-[alpha-D-6-acyl-mannopyranosyl-(1&lt;-&gt;6)-D-myo-inositol] + GDP-alpha-D-mannose = a 2-O-(alpha-D-mannosyl)-6-O-(6-O-acyl-alpha-D-mannosyl)-1-phosphatidyl-1D-myo-inositol + GDP + H(+). It participates in phospholipid metabolism; phosphatidylinositol metabolism. Its function is as follows. Involved in the biosynthesis of phosphatidyl-myo-inositol mannosides (PIM) which are early precursors in the biosynthesis of lipomannans (LM) and lipoarabinomannans (LAM). Catalyzes the addition of a mannosyl residue from GDP-D-mannose (GDP-Man) to the position 6 of a phosphatidyl-myo-inositol bearing an alpha-1,2-linked mannose residue (PIM1) to generate phosphatidyl-myo-inositol bearing alpha-1,2- and alpha-1,6-linked mannose residues (Ac1PIM2). PimB also catalyzes the addition of a mannosyl residue from GDP-Man to the position 6 of phosphatidyl-myo-inositol bearing an acylated alpha-1,2-linked mannose residue (Ac1PIM1) to generate monoacylated phosphatidyl-myo-inositol bearing alpha-1,2- and alpha-1,6-linked mannose residues (Ac1PIM2). The addition of the second mannosyl residue by PimB preferentially occurs before the acylation of the mannosyl residue transferred by PimA. Also able to transfer a mannosyl residue from GDP-Man to the position 6 of a phosphatidyl-myo-inositol (PI), but this reaction is very slow. This chain is GDP-mannose-dependent alpha-(1-6)-phosphatidylinositol monomannoside mannosyltransferase, found in Mycobacterium tuberculosis (strain CDC 1551 / Oshkosh).